We begin with the raw amino-acid sequence, 145 residues long: Putative pre-16S rRNA nuclease (145 aa).

This sequence belongs to the YqgF nuclease family.

The protein resides in the cytoplasm. In terms of biological role, could be a nuclease involved in processing of the 5'-end of pre-16S rRNA. This is Putative pre-16S rRNA nuclease from Pseudomonas fluorescens (strain ATCC BAA-477 / NRRL B-23932 / Pf-5).